Reading from the N-terminus, the 389-residue chain is GDSL esterase/lipase At1g28570 (389 aa).

Residues 1–25 (MATLFMKLVSFFLILSTFCLTTVNS) form the signal peptide. Ser-41 serves as the catalytic Nucleophile. Asn-137 and Asn-319 each carry an N-linked (GlcNAc...) asparagine glycan. Residues Asp-344 and His-347 contribute to the active site.

Belongs to the 'GDSL' lipolytic enzyme family.

The protein localises to the secreted. The protein is GDSL esterase/lipase At1g28570 of Arabidopsis thaliana (Mouse-ear cress).